A 292-amino-acid polypeptide reads, in one-letter code: Probable alpha-L-glutamate ligase (292 aa).

An ATP-grasp domain is found at 104–287; that stretch reads HQLLAAKGID…VATRIIEHVE (184 aa). ATP-binding positions include K141, 178 to 179, D187, and 211 to 213; these read EF and RSN. Mg(2+) is bound by residues D248, E260, and N262. Mn(2+) is bound by residues D248, E260, and N262.

The protein belongs to the RimK family. Mg(2+) serves as cofactor. Requires Mn(2+) as cofactor.

The sequence is that of Probable alpha-L-glutamate ligase from Stenotrophomonas maltophilia (strain K279a).